A 279-amino-acid polypeptide reads, in one-letter code: Biotin synthase (279 aa).

The region spanning 1–227 (MKVYLCAISN…NAMIMVAGGR (227 aa)) is the Radical SAM core domain. Positions 16, 20, and 23 each coordinate [4Fe-4S] cluster. [2Fe-2S] cluster contacts are provided by C60, C95, and C153.

Belongs to the radical SAM superfamily. Biotin synthase family. In terms of assembly, homodimer. [4Fe-4S] cluster serves as cofactor. It depends on [2Fe-2S] cluster as a cofactor.

It catalyses the reaction (4R,5S)-dethiobiotin + (sulfur carrier)-SH + 2 reduced [2Fe-2S]-[ferredoxin] + 2 S-adenosyl-L-methionine = (sulfur carrier)-H + biotin + 2 5'-deoxyadenosine + 2 L-methionine + 2 oxidized [2Fe-2S]-[ferredoxin]. It functions in the pathway cofactor biosynthesis; biotin biosynthesis; biotin from 7,8-diaminononanoate: step 2/2. In terms of biological role, catalyzes the conversion of dethiobiotin (DTB) to biotin by the insertion of a sulfur atom into dethiobiotin via a radical-based mechanism. The protein is Biotin synthase of Nitratiruptor sp. (strain SB155-2).